A 269-amino-acid chain; its full sequence is Proenkephalin-A (269 aa).

A signal peptide spans Met-1–Ala-24. Disulfide bonds link Cys-26/Cys-48, Cys-30/Cys-52, and Cys-33/Cys-65. A disordered region spans residues Asp-165 to Phe-191. 2 propeptides span residues Ser-198–Gln-209 and Val-219–Gln-229. Ser-253 is modified (phosphoserine).

The protein belongs to the opioid neuropeptide precursor family. In terms of processing, proenkephalin-A is cleaved by CTSL to generate Met-enkephalin. Post-translationally, processed and degraded by ACE. Probably cleaved by ACE. In terms of processing, processed by ACE to generate Met-enkephalin in the nucleus accumbens of the brain. Post-translationally, the N-terminal domain contains 6 conserved cysteines thought to be involved in disulfide bonding and/or processing. As to expression, expressed in brain, heart and testis.

The protein localises to the secreted. The protein resides in the cytoplasmic vesicle. It is found in the secretory vesicle. It localises to the chromaffin granule lumen. In terms of biological role, neuropeptide that competes with and mimic the effects of opiate drugs. They play a role in a number of physiologic functions, including pain perception and responses to stress. Functionally, met-enkephalin-Arg-Phe neuropeptide acts as a strong ligand of Mu-type opioid receptor OPRM1. Met-enkephalin-Arg-Phe-binding to OPRM1 in the nucleus accumbens of the brain increases activation of OPRM1, leading to long-term synaptic depression of glutamate release. Its function is as follows. Increases glutamate release in the striatum and decreases GABA concentration in the striatum. Increases glutamate release in the striatum. The sequence is that of Proenkephalin-A (Penk) from Rattus norvegicus (Rat).